The primary structure comprises 89 residues: uncharacterized protein (89 aa).

Positions M1 to L89 constitute an HTH arsR-type domain.

This is an uncharacterized protein from Methanocaldococcus jannaschii (strain ATCC 43067 / DSM 2661 / JAL-1 / JCM 10045 / NBRC 100440) (Methanococcus jannaschii).